The following is a 734-amino-acid chain: Photosystem I P700 chlorophyll a apoprotein A2 (734 aa).

8 helical membrane passes run 46–69, 135–158, 175–199, 273–291, 330–353, 369–395, 417–439, and 517–535; these read IFAS…FHVA, LYTG…LHLQ, LNHH…HVAI, IAHH…GHMY, LHFQ…QHMY, AALY…ILVI, AIIS…LYVH, and FLVH…LILV. [4Fe-4S] cluster contacts are provided by Cys-559 and Cys-568. A run of 2 helical transmembrane segments spans residues 575–596 and 643–665; these read AFYL…YWHW and LSVW…MFLI. Chlorophyll a is bound by residues His-654, Met-662, and Tyr-670. Trp-671 serves as a coordination point for phylloquinone. Residues 707–727 form a helical membrane-spanning segment; the sequence is LVGLAHFSVGYIFTYAAFLIA.

It belongs to the PsaA/PsaB family. As to quaternary structure, the PsaA/B heterodimer binds the P700 chlorophyll special pair and subsequent electron acceptors. PSI consists of a core antenna complex that captures photons, and an electron transfer chain that converts photonic excitation into a charge separation. The eukaryotic PSI reaction center is composed of at least 11 subunits. It depends on P700 is a chlorophyll a/chlorophyll a' dimer, A0 is one or more chlorophyll a, A1 is one or both phylloquinones and FX is a shared 4Fe-4S iron-sulfur center. as a cofactor.

The protein resides in the plastid. Its subcellular location is the chloroplast thylakoid membrane. It catalyses the reaction reduced [plastocyanin] + hnu + oxidized [2Fe-2S]-[ferredoxin] = oxidized [plastocyanin] + reduced [2Fe-2S]-[ferredoxin]. PsaA and PsaB bind P700, the primary electron donor of photosystem I (PSI), as well as the electron acceptors A0, A1 and FX. PSI is a plastocyanin-ferredoxin oxidoreductase, converting photonic excitation into a charge separation, which transfers an electron from the donor P700 chlorophyll pair to the spectroscopically characterized acceptors A0, A1, FX, FA and FB in turn. Oxidized P700 is reduced on the lumenal side of the thylakoid membrane by plastocyanin. This Atropa belladonna (Belladonna) protein is Photosystem I P700 chlorophyll a apoprotein A2.